The sequence spans 113 residues: MFSIRIATVVLAASAALRPPARITNTETPVNQCGSGSIQCCESVQSASAAQAAGILGPLDILTNLQGLVGSHCSPLAAVGVSGTSCSSQTVCCKDVSKSGLVNLGCSPINLNL.

The first 23 residues, 1-23 (MFSIRIATVVLAASAALRPPARI), serve as a signal peptide directing secretion. 4 cysteine pairs are disulfide-bonded: cysteine 33/cysteine 92, cysteine 40/cysteine 86, cysteine 41/cysteine 73, and cysteine 93/cysteine 106.

The protein belongs to the fungal hydrophobin family. In terms of assembly, self-assembles to form functional amyloid fibrils called rodlets. Self-assembly into fibrillar rodlets occurs spontaneously at hydrophobic:hydrophilic interfaces and the rodlets further associate laterally to form amphipathic monolayers.

It is found in the secreted. The protein localises to the cell wall. In terms of biological role, aerial growth, conidiation, and dispersal of filamentous fungi in the environment rely upon a capability of their secreting small amphipathic proteins called hydrophobins (HPBs) with low sequence identity. Class I can self-assemble into an outermost layer of rodlet bundles on aerial cell surfaces, conferring cellular hydrophobicity that supports fungal growth, development and dispersal; whereas Class II form highly ordered films at water-air interfaces through intermolecular interactions but contribute nothing to the rodlet structure. Fbh1 is a fruiting body-specific class I hydrophobin that is involved in the growth rate and primordia formation. The chain is Fruiting body-specific class I hydrophobin fbh1 from Pleurotus ostreatus (Oyster mushroom).